Reading from the N-terminus, the 413-residue chain is Peptidase T (413 aa).

His84 is a Zn(2+) binding site. Asp86 is an active-site residue. Position 147 (Asp147) interacts with Zn(2+). Glu181 acts as the Proton acceptor in catalysis. Zn(2+) is bound by residues Glu182, Asp204, and His386.

The protein belongs to the peptidase M20B family. It depends on Zn(2+) as a cofactor.

It is found in the cytoplasm. It catalyses the reaction Release of the N-terminal residue from a tripeptide.. Its function is as follows. Cleaves the N-terminal amino acid of tripeptides. This chain is Peptidase T, found in Ligilactobacillus salivarius (strain UCC118) (Lactobacillus salivarius).